The primary structure comprises 241 residues: MQDSLKDILLTFSFISRLPVKLGELSDWEVRMKRIPAYFTIVGYIPGLIYFTGSFLSLNFGIIAPLLSIVLGFYLFDLFHFDGLLDTLDGFLNQSSKSRRLEIMSKGNVGPFAVFYGVLYVIVFWELITSIEPVAFVFGSVFGRYTMDVVLVFSKPAKNEGLGAMLFPFNRFLLVPATLFTLPLLLIDVKLFLVSIFSSWLVGFLISKVSEKQIGGVTGDVLGGSCLIGQIVVLLILNYLI.

A run of 7 helical transmembrane segments spans residues 34–54 (RIPAYFTIVGYIPGLIYFTGS), 55–75 (FLSLNFGIIAPLLSIVLGFYL), 109–129 (VGPFAVFYGVLYVIVFWELIT), 133–153 (PVAFVFGSVFGRYTMDVVLVF), 165–185 (MLFPFNRFLLVPATLFTLPLL), 186–206 (LIDVKLFLVSIFSSWLVGFLI), and 221–241 (VLGGSCLIGQIVVLLILNYLI).

Belongs to the CobS family. Mg(2+) is required as a cofactor.

Its subcellular location is the cell inner membrane. The catalysed reaction is alpha-ribazole + adenosylcob(III)inamide-GDP = adenosylcob(III)alamin + GMP + H(+). It catalyses the reaction alpha-ribazole 5'-phosphate + adenosylcob(III)inamide-GDP = adenosylcob(III)alamin 5'-phosphate + GMP + H(+). The protein operates within cofactor biosynthesis; adenosylcobalamin biosynthesis; adenosylcobalamin from cob(II)yrinate a,c-diamide: step 7/7. In terms of biological role, joins adenosylcobinamide-GDP and alpha-ribazole to generate adenosylcobalamin (Ado-cobalamin). Also synthesizes adenosylcobalamin 5'-phosphate from adenosylcobinamide-GDP and alpha-ribazole 5'-phosphate. The chain is Adenosylcobinamide-GDP ribazoletransferase from Fervidobacterium nodosum (strain ATCC 35602 / DSM 5306 / Rt17-B1).